A 209-amino-acid chain; its full sequence is MSNVCIMDHPLIQHKIGIMRMKTTSTKEFRDLVAEVAMLIYYEASRNLPLADKEVETPLTKAIVKEIEGKKLCVVPILRAGMHMADGILNLTPNAKVGHIGLYRNEETLEPVEYFCKLPSDAPDREIFVVDPMLATGGSAIAAITLLKRRGIEKIRFLCLIAAPEGLKKLQEAHPDVDVFIGALDERLNEQGYILPGLGDAGDRIYGTK.

5-phospho-alpha-D-ribose 1-diphosphate contacts are provided by residues arginine 79, arginine 104, and 131-139; that span reads DPMLATGGS. Uracil contacts are provided by residues isoleucine 194 and 199 to 201; that span reads GDA. Residue aspartate 200 participates in 5-phospho-alpha-D-ribose 1-diphosphate binding.

This sequence belongs to the UPRTase family. Mg(2+) is required as a cofactor.

It catalyses the reaction UMP + diphosphate = 5-phospho-alpha-D-ribose 1-diphosphate + uracil. Its pathway is pyrimidine metabolism; UMP biosynthesis via salvage pathway; UMP from uracil: step 1/1. With respect to regulation, allosterically activated by GTP. Catalyzes the conversion of uracil and 5-phospho-alpha-D-ribose 1-diphosphate (PRPP) to UMP and diphosphate. In Lachnoclostridium phytofermentans (strain ATCC 700394 / DSM 18823 / ISDg) (Clostridium phytofermentans), this protein is Uracil phosphoribosyltransferase.